Consider the following 332-residue polypeptide: UDP-3-O-acylglucosamine N-acyltransferase (332 aa).

His-231 functions as the Proton acceptor in the catalytic mechanism.

This sequence belongs to the transferase hexapeptide repeat family. LpxD subfamily. Homotrimer.

It catalyses the reaction a UDP-3-O-[(3R)-3-hydroxyacyl]-alpha-D-glucosamine + a (3R)-hydroxyacyl-[ACP] = a UDP-2-N,3-O-bis[(3R)-3-hydroxyacyl]-alpha-D-glucosamine + holo-[ACP] + H(+). The protein operates within bacterial outer membrane biogenesis; LPS lipid A biosynthesis. In terms of biological role, catalyzes the N-acylation of UDP-3-O-acylglucosamine using 3-hydroxyacyl-ACP as the acyl donor. Is involved in the biosynthesis of lipid A, a phosphorylated glycolipid that anchors the lipopolysaccharide to the outer membrane of the cell. The polypeptide is UDP-3-O-acylglucosamine N-acyltransferase (Ruthia magnifica subsp. Calyptogena magnifica).